A 316-amino-acid polypeptide reads, in one-letter code: Olfactory receptor 1N2 (316 aa).

Topologically, residues 1–28 (MGKPGRVNQTTVSDFLLLGLSEWPEEQP) are extracellular. An N-linked (GlcNAc...) asparagine glycan is attached at N8. A helical transmembrane segment spans residues 29–49 (LLFGIFLGMYLVTMVGNLLII). Residues 50-60 (LAISSDPHLHT) lie on the Cytoplasmic side of the membrane. Residues 61–81 (PMYFFLANLSLTDACFTSASI) traverse the membrane as a helical segment. Residues 82 to 100 (PKMLANIHTQSQIISYSGC) lie on the Extracellular side of the membrane. A disulfide bond links C100 and C182. A helical membrane pass occupies residues 101 to 121 (LAQLYFLLMFGGLDNCLLAVM). Topologically, residues 122-145 (AYDRYVAICQPLHYSTSMSPQLCA) are cytoplasmic. The helical transmembrane segment at 146 to 166 (LMLGVCWVLTNCPALMHTLLL) threads the bilayer. Topologically, residues 167 to 199 (TRVAFCAQKAIPHFYCDPSALLKLACSDTHVNE) are extracellular. A helical transmembrane segment spans residues 200 to 220 (LMIITMGLLFLTVPLLLIVFS). Topologically, residues 221-243 (YVRIFWAVFVISSPGGRWKAFST) are cytoplasmic. The helical transmembrane segment at 244 to 264 (CGSHLTVVLLFYGSLMGVYLL) threads the bilayer. Residues 265–274 (PPSTYSTERE) are Extracellular-facing. A helical transmembrane segment spans residues 275-295 (SRAAVLYMVIIPTLNPFIYSL). Over 296–316 (RNRDMKEALGKLFVSGKTFFL) the chain is Cytoplasmic.

This sequence belongs to the G-protein coupled receptor 1 family.

The protein localises to the membrane. Functionally, odorant receptor. The polypeptide is Olfactory receptor 1N2 (OR1N2) (Homo sapiens (Human)).